Reading from the N-terminus, the 325-residue chain is Probable isoaspartyl peptidase/L-asparaginase 2 (325 aa).

The active-site Nucleophile is Thr-195. Residues 223-226 and 245-248 contribute to the substrate site; these read RIGD and TGEG.

This sequence belongs to the Ntn-hydrolase family. As to quaternary structure, heterotetramer of two alpha and two beta chains arranged as a dimer of alpha/beta heterodimers. Cleaved into an alpha and beta chain by autocatalysis; this activates the enzyme. The N-terminal residue of the beta subunit is responsible for the nucleophile hydrolase activity.

The catalysed reaction is Cleavage of a beta-linked Asp residue from the N-terminus of a polypeptide.. In terms of biological role, acts in asparagine catabolism and also in the final steps of protein degradation via hydrolysis of a range of isoaspartyl dipeptides. The sequence is that of Probable isoaspartyl peptidase/L-asparaginase 2 from Arabidopsis thaliana (Mouse-ear cress).